The chain runs to 290 residues: Triplex capsid protein 1 (290 aa).

Belongs to the herpesviridae TRX1 protein family. Interacts with TRX2, MCP and capsid vertex component 2/CVC2.

It is found in the virion. Its subcellular location is the host nucleus. Structural component of the T=16 icosahedral capsid. The capsid is composed of pentamers and hexamers of major capsid protein/MCP, which are linked together by heterotrimers called triplexes. These triplexes are formed by a single molecule of triplex protein 1/TRX1 and two copies of triplex protein 2/TRX2. Additionally, TRX1 is required for efficient transport of TRX2 to the nucleus, which is the site of capsid assembly. This chain is Triplex capsid protein 1, found in Human cytomegalovirus (strain AD169) (HHV-5).